Consider the following 65-residue polypeptide: Venom protein Vn4.6 (65 aa).

The signal sequence occupies residues 1–23 (MSKIILAIFLIVLCGLIFVTVDA).

Post-translationally, contains 2 disulfide bonds. Expressed by the venom gland.

The protein resides in the secreted. Its function is as follows. Endoparasitoid venom protein that interferes with the activation of host hemolymph prophenoloxidase. May act in conjunction with other venom proteins (such as Vn50), by competitive binding to the zymogen and thereby interrupting the enzyme. The polypeptide is Venom protein Vn4.6 (Cotesia rubecula (Cabbage white butterfly parasite)).